A 178-amino-acid polypeptide reads, in one-letter code: CDP-archaeol synthase (178 aa).

The next 5 helical transmembrane spans lie at 3–23 (LLLL…ANAV), 56–76 (FFGI…VILY), 91–111 (IILS…GSFI), 131–151 (FIIF…NIIV), and 152–172 (LLLV…YKLH).

Belongs to the CDP-archaeol synthase family. Mg(2+) is required as a cofactor.

It is found in the cell membrane. It catalyses the reaction 2,3-bis-O-(geranylgeranyl)-sn-glycerol 1-phosphate + CTP + H(+) = CDP-2,3-bis-O-(geranylgeranyl)-sn-glycerol + diphosphate. Its pathway is membrane lipid metabolism; glycerophospholipid metabolism. Functionally, catalyzes the formation of CDP-2,3-bis-(O-geranylgeranyl)-sn-glycerol (CDP-archaeol) from 2,3-bis-(O-geranylgeranyl)-sn-glycerol 1-phosphate (DGGGP) and CTP. This reaction is the third ether-bond-formation step in the biosynthesis of archaeal membrane lipids. In Methanococcus maripaludis (strain DSM 14266 / JCM 13030 / NBRC 101832 / S2 / LL), this protein is CDP-archaeol synthase.